The following is a 1220-amino-acid chain: Protein patched homolog 1 (1220 aa).

Residues 1–27 (MASDPRDPGPAGGVFGDLPPSYTRSPP) form a disordered region. Topologically, residues 1–84 (MASDPRDPGP…GCHIQRHCGK (84 aa)) are cytoplasmic. The helical transmembrane segment at 85-105 (VLFIGLLVFGALSVGLRVAAI) threads the bilayer. The Extracellular portion of the chain corresponds to 106–419 (ETDIEKLWVE…LNDIMKSFSD (314 aa)). A glycan (N-linked (GlcNAc...) asparagine) is linked at Asn397. The chain crosses the membrane as a helical span at residues 420–440 (VSVIRVAGGYLLMLAYACVTM). Residues 421–579 (SVIRVAGGYL…LLIFPAILSL (159 aa)) enclose the SSD domain. The Cytoplasmic segment spans residues 441–449 (LRWDCAKSQ). Residues 450 to 470 (GAVGLAGVLLVALSVAAGLGL) traverse the membrane as a helical segment. The Extracellular segment spans residues 471–484 (CSLLGLSFNAATTQ). Residues 485 to 505 (VLPSLALGIGVDDMFLLGHSF) form a helical membrane-spanning segment. Residues 506–528 (TETRSNIPFKERTGDCLRRTGTS) lie on the Cytoplasmic side of the membrane. The helical transmembrane segment at 529–549 (VALTSVNNMIAFFMAALVPIP) threads the bilayer. The Extracellular segment spans residues 550–558 (ALRAFSLQA). Residues 559–579 (AVVVVFNFAMALLIFPAILSL) traverse the membrane as a helical segment. Residues 580–739 (DLHRREDKRL…APLLLKPETK (160 aa)) lie on the Cytoplasmic side of the membrane. A helical membrane pass occupies residues 740–760 (TVVVVVFVALLSLSLYGTTMV). Residues 761 to 1016 (HDGLYLTDIV…WEQYIGLRHW (256 aa)) lie on the Extracellular side of the membrane. N-linked (GlcNAc...) asparagine glycans are attached at residues Asn865 and Asn888. A helical membrane pass occupies residues 1017-1037 (FLLSISVVLACTFLVCAILLL). Over 1038 to 1044 (NPWTAGV) the chain is Cytoplasmic. The helical transmembrane segment at 1045-1065 (IVFILPMMTVELFGIMGLIGI) threads the bilayer. The Extracellular segment spans residues 1066–1072 (KLSAIPV). Residues 1073–1093 (VILIASVGIGVEFTVHIALGF) form a helical membrane-spanning segment. Residues 1094–1110 (LTAIGDRNTRSAVAMEH) lie on the Cytoplasmic side of the membrane. A helical membrane pass occupies residues 1111–1131 (MFAPVIDGAISTLLGVLMLAG). At 1132 to 1143 (SEFDFIMRYFFA) the chain is on the extracellular side. Residues 1144 to 1164 (VLAILTLLGILNGLVLLPVLL) form a helical membrane-spanning segment. Over 1165 to 1220 (SLMGPPAEVVPANNANHLQSPSPEPMPPPMNHHGYYAGHIPKASHQAFSETSDSEY) the chain is Cytoplasmic.

This sequence belongs to the patched family. In terms of processing, glycosylation is necessary for SHH binding. In terms of tissue distribution, detected in embryonic presomitic mesoderm, neuroectoderm, tissue surrounding the notochord, ventral neural tube.

The protein localises to the membrane. Its function is as follows. Acts as a receptor for sonic hedgehog (SHH), indian hedgehog (IHH) and desert hedgehog (DHH). Associates with the smoothened protein (SMO) to transduce the hedgehog's proteins signal. This chain is Protein patched homolog 1 (ptch1), found in Danio rerio (Zebrafish).